Consider the following 542-residue polypeptide: MAKEIFFSDKARNGLFEGVTKLADAVKVTMGPRGRNVLIQKSFGAPHITKDGVSVAREIELEDTLENMGAQLVKEVASNTADEAGDGTTTATVLAHSIFKEGLRNITAGANPIEVKRGMDKASAAIIEELKKISKEVKDKKEIAQVATISANSDETIGNLIAEAMDRVGKDGVITVEEAKGINDDLEVVEGMQFDRGYLSPYFVTNTEKMTCEMENPLILITDSKITSLKDLIPVLEQIQQSGRPLLIISDDLEGEALATLVLNRLKGVLNIAAVKAPGFGDRKKEMLKDIAILTGANVITEELGLSLDKATLDDLGQAGRVVIDKDNTVIVDGKGDSAAVDARVAEIKIQVENTTSEYDKEKLQERLAKLSGGVAVIKVGAATETEMKEKKDRVDDALSATKAAVDEGIVIGGGAALAKASKAVKLDLEHDEAVGAEIILRAVYAPMKQIAQNAGFDAGVVADKIANNSEANLGFNAATGEYVNMLEAGIIDPLKVARVALQNATSVASLLLTTEATVSDIKEAPTPAPTMPDMGGMPGMM.

ATP contacts are provided by residues 29-32 (TMGP), Lys50, 86-90 (DGTTT), Gly414, 477-479 (NAA), and Asp493.

This sequence belongs to the chaperonin (HSP60) family. Forms a cylinder of 14 subunits composed of two heptameric rings stacked back-to-back. Interacts with the co-chaperonin GroES.

Its subcellular location is the cytoplasm. The enzyme catalyses ATP + H2O + a folded polypeptide = ADP + phosphate + an unfolded polypeptide.. Together with its co-chaperonin GroES, plays an essential role in assisting protein folding. The GroEL-GroES system forms a nano-cage that allows encapsulation of the non-native substrate proteins and provides a physical environment optimized to promote and accelerate protein folding. This is Chaperonin GroEL from Sulfurovum sp. (strain NBC37-1).